Consider the following 683-residue polypeptide: Zinc finger protein 510 (683 aa).

A KRAB domain is found at 46 to 117 (VSFKDVTIEF…EEEFSNQSHP (72 aa)). The C2H2-type 1; degenerate zinc-finger motif lies at 254 to 276 (FECNKIGKAFNDKANCVKHNSSH). C2H2-type zinc fingers lie at residues 404-426 (YKCN…QRTH), 432-454 (FECS…QRIH), 460-482 (YKCN…QRIH), 488-510 (YECS…HRIH), 516-538 (FQCN…QRTH), 544-566 (YQCN…QKTH), 572-594 (FKCN…QRIH), 600-622 (FKCN…QRIH), and 628-650 (FQCN…QRTH).

This sequence belongs to the krueppel C2H2-type zinc-finger protein family.

It is found in the nucleus. Functionally, may be involved in transcriptional regulation. This is Zinc finger protein 510 (ZNF510) from Homo sapiens (Human).